A 58-amino-acid chain; its full sequence is Small ribosomal subunit protein bS21 (58 aa).

The protein belongs to the bacterial ribosomal protein bS21 family.

This Staphylococcus aureus (strain bovine RF122 / ET3-1) protein is Small ribosomal subunit protein bS21.